The primary structure comprises 116 residues: Protein TRACHEARY ELEMENT DIFFERENTIATION-RELATED 6 (116 aa).

The Extracellular portion of the chain corresponds to 1–24 (MASTDSVYRPTPTPDHDTTVVVVV). Residues 25–45 (FVSLGCVMFLAFLAFVIWFLI) traverse the membrane as a helical segment. Residues 46–116 (KKRSRKHRER…GVGSSVVSRS (71 aa)) are Cytoplasmic-facing.

Interacts with CESA7/IRX3, a subunit of the secondary cell wall (SCW)-related cellulose synthase complex. In terms of tissue distribution, expressed preferentially in differentiating vessel elements in seedlings.

The protein resides in the cell membrane. The protein localises to the secreted. It is found in the cell wall. Functionally, involved in the secondary cell wall (SCW) formation of vessel elements (e.g. protoxylem and metaxylem), thus promoting tracheary element (TE) differentiation. The polypeptide is Protein TRACHEARY ELEMENT DIFFERENTIATION-RELATED 6 (Arabidopsis thaliana (Mouse-ear cress)).